The chain runs to 477 residues: MFRLNALSALAELAVGSRWYHGTSQPTQTKRRLMLVAFLGASAVTASTGLLWKKAHAESPPSVNSKKTDAGDKGKSKDTREVSSHEGSAADTAAEPYPEEKKKKRSGFRDRKVMEYENRIRAYSTPDKIFRYFATLKVINEPGETEVFMTPQDFVRSITPNEKQPEHLGLDQYIIKRFDGKKIAQEREKFADEGSIFYTLGECGLISFSDYIFLTTVLSTPQRNFEIAFKMFDLNGDGEVDMEEFEQVQSIIRSQTSMGMRHRDRPTTGNTLKSGLCSALTTYFFGADLKGKLTIKNFLEFQRKLQHDVLKLEFERHDPVDGRISERQFGGMLLAYSGVQSKKLTAMQRQLKKHFKDGKGLTFQEVENFFTFLKNINDVDTALSFYHMAGASLDKVTMQQVARTVAKVELSDHVCDVVFALFDCDGNGELSNKEFVSIMKQRLMRGLEKPKDMGFTRLMQAMWKCAQETAWDFALPK.

Residues 1–33 (MFRLNALSALAELAVGSRWYHGTSQPTQTKRRL) constitute a mitochondrion transit peptide. The disordered stretch occupies residues 55 to 108 (AHAESPPSVNSKKTDAGDKGKSKDTREVSSHEGSAADTAAEPYPEEKKKKRSGF). Residues 66 to 84 (KKTDAGDKGKSKDTREVSS) show a composition bias toward basic and acidic residues. The interval 101 to 112 (KKKKRSGFRDRK) is polybasic region. Position 124 is a phosphoserine (serine 124). Residues 128–131 (KIFR) are k/R-ring. Residues 220–255 (TPQRNFEIAFKMFDLNGDGEVDMEEFEQVQSIIRSQ) form the EF-hand 1 domain. Positions 233, 235, 237, 239, and 244 each coordinate Ca(2+). Residues 261 to 265 (RHRDR) are k/R-ring. In terms of domain architecture, EF-hand 2; degenerate spans 356-376 (KDGKGLTFQEVENFFTFLKNI). An EF-hand 3 domain is found at 410 to 445 (LSDHVCDVVFALFDCDGNGELSNKEFVSIMKQRLMR). Ca(2+) is bound by residues aspartate 423, aspartate 425, asparagine 427, glutamate 429, and glutamate 434. Arginine 457 is subject to Asymmetric dimethylarginine. Residues 457–467 (RLMQAMWKCAQ) are C-helix region.

It belongs to the MICU1 family. MICU1 subfamily. In terms of assembly, heterodimer; disulfide-linked; heterodimerizes with MICU2 or MICU3. Homodimer; disulfide-linked. Component of the uniplex complex, composed of MCU, EMRE/SMDT1, MICU1 and MICU2 (or MICU3) in a 4:4:1:1 stoichiometry. The composition of calcium sensors within the uniplex complex can differ depending on tissues: a MICU1 homodimer can be present instead of the MICU1-MICU2 heterodimer in skeletal-muscle and kidney. MICU1 is recruited to the uniplex complex by EMRE/SMDT1, and it associates with MCU at low calcium levels, occluding the pore of the MCU channel. Associates with the MICOS complex. Interacts with SLC25A23. Interacts with CHCHD4/MIA40; which introduces the interchain disulfide bond with MICU2. Interacts (when methylated) with UCP2; leading to decrease the calcium sensitivity of MICU1. Phosphorylation at Ser-124 by AKT1 impairs its maturation and stability. Post-translationally, asymmetric dimethylation at Arg-457 by PRMT1 decreases the calcium sensitivity of MICU1 by promoting interaction with UCP2. In terms of processing, degraded by YME1L1 when not complexed as homodimer or heterodimer. Not degraded when complexed as homodimer or heterodimer; the presence of the interchain disulfide bond protecting MICU1 from degradation by YME1L1.

The protein localises to the mitochondrion intermembrane space. The protein resides in the mitochondrion inner membrane. Its function is as follows. Calcium sensor of the mitochondrial calcium uniporter (MCU) channel, which senses calcium level via its EF-hand domains. MICU1 and MICU2 (or MICU3) form a disulfide-linked heterodimer that stimulates and inhibits MCU activity, depending on the concentration of calcium. At low calcium levels, MICU1 occludes the pore of the MCU channel, preventing mitochondrial calcium uptake. At higher calcium levels, calcium-binding to MICU1 and MICU2 (or MICU3) induces a conformational change that weakens MCU-MICU1 interactions and moves the MICU1-MICU2 heterodimer away from the pore, allowing calcium permeation through the MCU channel. Also required to protect against manganese toxicity by preventing manganese uptake by MCU: mechanistically, manganese-binding to its EF-hand domains does not induce any conformational change, maintaining MCU pore occlusion. Acts as a regulator of mitochondrial cristae structure independently of its ability to regulate the mitochondrial calcium uniporter channel. Regulates glucose-dependent insulin secretion in pancreatic beta-cells by regulating mitochondrial calcium uptake. Induces T-helper 1-mediated autoreactivity, which is accompanied by the release of IFNG. This Rattus norvegicus (Rat) protein is Calcium uptake protein 1, mitochondrial (Micu1).